The chain runs to 168 residues: Large ribosomal subunit protein uL11 (168 aa).

Belongs to the universal ribosomal protein uL11 family. In terms of assembly, part of the ribosomal stalk of the 50S ribosomal subunit. Interacts with L10 and the large rRNA to form the base of the stalk. L10 forms an elongated spine to which L12 dimers bind in a sequential fashion forming a multimeric L10(L12)X complex.

Its function is as follows. Forms part of the ribosomal stalk which helps the ribosome interact with GTP-bound translation factors. The sequence is that of Large ribosomal subunit protein uL11 from Metallosphaera sedula (strain ATCC 51363 / DSM 5348 / JCM 9185 / NBRC 15509 / TH2).